Reading from the N-terminus, the 182-residue chain is Transmembrane protein 11 homolog, mitochondrial (182 aa).

Ser25 carries the phosphoserine modification. Helical transmembrane passes span 70 to 89 and 91 to 108; these read TAVA…RDRP and IAAP…LYTV.

Belongs to the TMEM11 family.

It is found in the mitochondrion inner membrane. In terms of biological role, plays a role in mitochondrial morphogenesis. The chain is Transmembrane protein 11 homolog, mitochondrial (Pmi) from Drosophila melanogaster (Fruit fly).